The primary structure comprises 496 residues: WD repeat-containing protein 37 (496 aa).

2 stretches are compositionally biased toward polar residues: residues 1–13 (MPTE…TARQ) and 22–31 (SLSIRRTNSS). The tract at residues 1–50 (MPTESGSCSTARQAKQKRKSHSLSIRRTNSSEQERTGLPREMLEGQDSKL) is disordered. The segment covering 32-47 (EQERTGLPREMLEGQD) has biased composition (basic and acidic residues). WD repeat units follow at residues 154–194 (GHRD…CLVK) and 197–236 (GHVG…PTPQ). Positions 238-267 (VADTSQQISGEDEIECSDKDEPDIDGDVSS) are disordered. A compositionally biased stretch (acidic residues) spans 247–265 (GEDEIECSDKDEPDIDGDV). WD repeat units follow at residues 281–320 (SHQG…LVHS), 323–362 (GHDQ…IHSV), 367–405 (GHTD…SPIA), 408–447 (RTDS…LARL), and 454–495 (GHRR…LLQE).

As to quaternary structure, forms homodimers. Interacts with PACS1. Interacts with PACS2.

The protein localises to the cytoplasm. It localises to the nucleus. Its function is as follows. Required for normal ER Ca2+ handling in lymphocytes. Together with PACS1, it plays an essential role in stabilizing peripheral lymphocyte populations. The polypeptide is WD repeat-containing protein 37 (Wdr37) (Mus musculus (Mouse)).